Here is a 248-residue protein sequence, read N- to C-terminus: Aquaporin Z (248 aa).

The next 2 helical transmembrane spans lie at 11-31 and 36-56; these read FIGT…AAAF and IGFA…AFAI. The NPA 1 signature appears at 65 to 67; sequence NPA. Helical transmembrane passes span 87–107, 132–152, and 161–181; these read IAAQ…IAGG, LLAC…IILG, and GFAP…SIPV. The NPA 2 motif lies at 187–189; sequence NPA. The helical transmembrane segment at 203 to 223 threads the bilayer; that stretch reads IAELWLFWLAPIVGAALAGLF.

This sequence belongs to the MIP/aquaporin (TC 1.A.8) family. In terms of assembly, homotetramer.

It is found in the cell inner membrane. It carries out the reaction H2O(in) = H2O(out). Functionally, channel that permits osmotically driven movement of water in both directions. It is involved in the osmoregulation and in the maintenance of cell turgor during volume expansion in rapidly growing cells. It mediates rapid entry or exit of water in response to abrupt changes in osmolarity. This Gloeobacter violaceus (strain ATCC 29082 / PCC 7421) protein is Aquaporin Z.